Here is a 329-residue protein sequence, read N- to C-terminus: Malate dehydrogenase 2 (329 aa).

Glycine 12–alanine 18 contacts NAD(+). 2 residues coordinate substrate: arginine 93 and arginine 99. NAD(+) contacts are provided by residues asparagine 106, glutamine 113, and valine 130–asparagine 132. Substrate-binding residues include asparagine 132 and arginine 163. Histidine 188 functions as the Proton acceptor in the catalytic mechanism.

The protein belongs to the LDH/MDH superfamily. MDH type 2 family.

It catalyses the reaction (S)-malate + NAD(+) = oxaloacetate + NADH + H(+). Catalyzes the reversible oxidation of malate to oxaloacetate. This Burkholderia thailandensis (strain ATCC 700388 / DSM 13276 / CCUG 48851 / CIP 106301 / E264) protein is Malate dehydrogenase 2.